Consider the following 167-residue polypeptide: Centrin-3 (167 aa).

EF-hand domains are found at residues 25–60 (EQKQEIKDAFELFDTDKDEAIDYHELKVAMRALGFD), 61–96 (VKKADVLKILKDYDREATGKITFEDFNEVVTDWILE), 98–133 (DPHEEILKAFKLFDDDDSGKISLRNLRRVARELGEN), and 134–167 (MSDEELRAMIEEFDKDGDGEINQEEFIAIMTGDI). Serine 135 is modified (phosphoserine). Positions 147, 149, 151, 153, and 158 each coordinate Ca(2+).

The protein belongs to the centrin family. In terms of assembly, monomer. Component of the nuclear pore complex (NPC)-associated TREX-2 complex (transcription and export complex 2), composed of at least GANP, 2 copies of ENY2, PCID2, SEM1/DSS1, and either centrin CETN2 or centrin CETN3. The TREX-2 complex also associates with ALYREF/ALY and with the nucleoporin NUP153. Interacts with USP49.

It is found in the cytoplasm. Its subcellular location is the cytoskeleton. It localises to the microtubule organizing center. The protein localises to the centrosome. The protein resides in the nucleus. It is found in the nucleolus. Its subcellular location is the nucleus envelope. It localises to the nuclear pore complex. The protein localises to the centriole. Plays a fundamental role in microtubule-organizing center structure and function. Its function is as follows. As a component of the TREX-2 complex, involved in the export of mRNAs to the cytoplasm through the nuclear pores. The sequence is that of Centrin-3 (CETN3) from Homo sapiens (Human).